We begin with the raw amino-acid sequence, 214 residues long: Adenylate kinase (214 aa).

Residue 10 to 15 (GAGKGT) coordinates ATP. Residues 30–59 (STGDMFRAALKNQTPLGLKAKEYMDKGELV) are NMP. AMP is bound by residues T31, R36, 57–59 (ELV), 85–88 (GFPR), and Q92. The interval 126–163 (GRRVCRQCGATYHVKFNPPKVEGVCDACGGELYQRSDD) is LID. ATP is bound at residue R127. Residues C130 and C133 each contribute to the Zn(2+) site. 136–137 (TY) is an ATP binding site. Zn(2+) is bound by residues C150 and C153. The AMP site is built by R160 and R171. K199 provides a ligand contact to ATP.

Belongs to the adenylate kinase family. Monomer.

It localises to the cytoplasm. The enzyme catalyses AMP + ATP = 2 ADP. It participates in purine metabolism; AMP biosynthesis via salvage pathway; AMP from ADP: step 1/1. In terms of biological role, catalyzes the reversible transfer of the terminal phosphate group between ATP and AMP. Plays an important role in cellular energy homeostasis and in adenine nucleotide metabolism. The polypeptide is Adenylate kinase (Carboxydothermus hydrogenoformans (strain ATCC BAA-161 / DSM 6008 / Z-2901)).